We begin with the raw amino-acid sequence, 554 residues long: (E)-beta-caryophyllene synthase (554 aa).

Positions 313 and 317 each coordinate Mn(2+). The DDXXD motif signature appears at 313–317 (DDIYD). 2 homodimerization regions span residues 319-325 (YGTLDEL) and 391-427 (EAQW…LAVI). The Mn(2+) site is built by aspartate 457 and glutamate 465.

This sequence belongs to the terpene synthase family. As to quaternary structure, homodimer. Requires Mn(2+) as cofactor. It depends on Mg(2+) as a cofactor. As to expression, expressed in peltate glandular trichomes. Present at low levels in flowers, leaves and stems.

The catalysed reaction is (2E,6E)-farnesyl diphosphate = (-)-(E)-beta-caryophyllene + diphosphate. It carries out the reaction (2E,6E)-farnesyl diphosphate = alpha-humulene + diphosphate. The protein operates within secondary metabolite biosynthesis; terpenoid biosynthesis. Involved in the biosynthesis of phenolic sesquiterpenes natural products. Sesquiterpene synthase converting (2E,6E)-farnesyl diphosphate (FPP) to (E)-beta-caryophyllene and alpha-humulene. The sequence is that of (E)-beta-caryophyllene synthase from Origanum vulgare (Wild marjoram).